A 362-amino-acid polypeptide reads, in one-letter code: MSRAPTLAAAAAVAAVVLICSSSTATAADGNARQPPLAPGLSFDFYKRSCPKAESIVRSFVQDAVRRDVGLAAGLLRLHFHDCFVQGCDASVLLDGSATGPGEQQAPPNLTLRPTAFKAINDIHDRLHKECGGTVVSCSDVLALAARDSVVVSGGPSYKVPLGRRDSASFATQQDVLSGLPPPTAAVPALLAVLSKINLDATDLVALSGGHTIGLGHCTSFEDRLFPRPDPTLNATFAGQLRRTCPAKGTDRRTPLDVRTPNAFDNKYYVNLVNREGLFTSDQDLFSNARTRALVDKFARSQRDFFDQFAFSVVKMGQIKVLTGTQGQIRTNCSARNAAGTTMLPWSVSVVEEAADESLGVF.

An N-terminal signal peptide occupies residues 1-31 (MSRAPTLAAAAAVAAVVLICSSSTATAADGN). Disulfide bonds link Cys-50/Cys-131, Cys-83/Cys-88, Cys-138/Cys-333, and Cys-218/Cys-245. His-81 acts as the Proton acceptor in catalysis. Ca(2+) contacts are provided by Asp-82, Val-85, Gly-87, Asp-89, and Ser-91. Asn-109 carries N-linked (GlcNAc...) asparagine glycosylation. Thr-111 lines the (indol-3-yl)acetate pocket. Pro-181 contributes to the substrate binding site. Position 211 (His-211) interacts with heme b. Ca(2+) is bound at residue Thr-212. Asn-234 is a glycosylation site (N-linked (GlcNAc...) asparagine). 4 residues coordinate Ca(2+): Asp-257, Thr-260, Ala-263, and Asp-265. A glycan (N-linked (GlcNAc...) asparagine) is linked at Asn-332.

It belongs to the peroxidase family. Classical plant (class III) peroxidase subfamily. In terms of assembly, monomer. The cofactor is heme b. Requires Ca(2+) as cofactor. The proportions of glycoforms I and II are 35% and 65% respectively. As to expression, present in germinated and ungerminated grain, seedlings, and leaves and stem of the mature plant.

It is found in the secreted. It carries out the reaction 2 a phenolic donor + H2O2 = 2 a phenolic radical donor + 2 H2O. Removal of H(2)O(2), oxidation of toxic reductants, biosynthesis and degradation of lignin, suberization, auxin catabolism, response to environmental stresses such as wounding, pathogen attack and oxidative stress. These functions might be dependent on each isozyme/isoform in each plant tissue. Has a high preference for hydroxycinnamates as substrates. Substrate preference is ferulic acid &gt; p-coumaric acid &gt; N-acetyl tyrosine methyl ester &gt; N-acetyl-tyrosine &gt; tyrosine &gt; catechol &gt; Gly-Tyr-Gly. May be involved in the formation of diferulate linkages in the plant cell wall. This Sorghum bicolor (Sorghum) protein is Cationic peroxidase SPC4.